Reading from the N-terminus, the 361-residue chain is Molybdenum import ATP-binding protein ModC (361 aa).

One can recognise an ABC transporter domain in the interval M1–Q228. G31–T38 provides a ligand contact to ATP. Residues G289–D356 form the Mop domain.

The protein belongs to the ABC transporter superfamily. Molybdate importer (TC 3.A.1.8) family. As to quaternary structure, the complex is composed of two ATP-binding proteins (ModC), two transmembrane proteins (ModB) and a solute-binding protein (ModA).

The protein localises to the cell inner membrane. It carries out the reaction molybdate(out) + ATP + H2O = molybdate(in) + ADP + phosphate + H(+). In terms of biological role, part of the ABC transporter complex ModABC involved in molybdenum import. Responsible for energy coupling to the transport system. The polypeptide is Molybdenum import ATP-binding protein ModC (Shewanella sp. (strain MR-7)).